A 483-amino-acid polypeptide reads, in one-letter code: Serine protease HTRA4 (483 aa).

The first 30 residues, 1–30, serve as a signal peptide directing secretion; sequence MSFQRLWAVRTQFLLLWLLLPAVPVPWAEA. Residues 35–113 enclose the IGFBP N-terminal domain; sequence VSLPCPDACD…GAWLGTCGCA (79 aa). Intrachain disulfides connect C39-C65, C43-C67, C48-C68, C54-C71, C79-C93, and C87-C110. The segment at 208-368 is serine protease; the sequence is GSGFIVSEDG…IPSDRIRQFL (161 aa). Catalysis depends on charge relay system residues H224, D254, and S332. A PDZ domain is found at 379–471; that stretch reads KAPLQKKYLG…LSIIVLRGSQ (93 aa).

The protein belongs to the peptidase S1C family.

Its subcellular location is the secreted. Serine protease. This is Serine protease HTRA4 (Htra4) from Mus musculus (Mouse).